We begin with the raw amino-acid sequence, 370 residues long: Ornithine carbamoyltransferase, mitochondrial (370 aa).

The N-terminal 38 residues, 1 to 38, are a transit peptide targeting the mitochondrion; that stretch reads MPSPLRTAPQPPLRAFHNPPALRRLYSSTSHSAATPAT. Carbamoyl phosphate is bound by residues 97 to 100, Arg-148, His-175, and Gln-178; that span reads STRT. L-ornithine-binding residues include Asn-216, Asp-282, Ser-286, and Met-287. The active-site Proton acceptor is Cys-324. Carbamoyl phosphate is bound by residues 324–325 and Arg-351; that span reads CL.

Belongs to the aspartate/ornithine carbamoyltransferase superfamily. OTCase family. Homotrimer.

Its subcellular location is the mitochondrion matrix. It catalyses the reaction carbamoyl phosphate + L-ornithine = L-citrulline + phosphate + H(+). It participates in amino-acid biosynthesis; L-arginine biosynthesis; L-arginine from L-ornithine and carbamoyl phosphate: step 1/3. The sequence is that of Ornithine carbamoyltransferase, mitochondrial (argB) from Aspergillus niger.